The sequence spans 513 residues: ATP synthase subunit alpha (513 aa).

Position 169–176 (169–176 (GDRQTGKT)) interacts with ATP.

The protein belongs to the ATPase alpha/beta chains family. As to quaternary structure, F-type ATPases have 2 components, CF(1) - the catalytic core - and CF(0) - the membrane proton channel. CF(1) has five subunits: alpha(3), beta(3), gamma(1), delta(1), epsilon(1). CF(0) has three main subunits: a(1), b(2) and c(9-12). The alpha and beta chains form an alternating ring which encloses part of the gamma chain. CF(1) is attached to CF(0) by a central stalk formed by the gamma and epsilon chains, while a peripheral stalk is formed by the delta and b chains.

The protein localises to the cell inner membrane. The enzyme catalyses ATP + H2O + 4 H(+)(in) = ADP + phosphate + 5 H(+)(out). In terms of biological role, produces ATP from ADP in the presence of a proton gradient across the membrane. The alpha chain is a regulatory subunit. The sequence is that of ATP synthase subunit alpha from Histophilus somni (strain 2336) (Haemophilus somnus).